Consider the following 410-residue polypeptide: MQPPSLLLLVLGLLAAPAAALVRIPLHKFTSVRRTMTELGGPVEDLIAKGPISKYAQGAPAVTGGPIPEMLRNYMDAQYYGEIGIGTPPQCFTVVFDTGSSNLWVPSIHCKLLDIACWIHHKYNSGKSSTYVKNGTSFDIHYGSGSLSGYLSQDTVSVPCKSALSGLAGIKVERQTFGEATKQPGITFIAAKFDGILGMAYPRISVNNVLPVFDNLMQQKLVEKNIFSFYLNRDPNAQPGGELMLGGTDSKYYKGPLSYLNVTRKAYWQVHMEQVDVGSSLTLCKGGCEAIVDTGTSLIVGPVDEVRELQKAIGAVPLIQGEYMIPCEKVSTLPDVTLKLGGKLYKLSSEDYTLKVSQGGKTICLSGFMGMDIPPPGGPLWILGDVFIGCYYTVFDRDQNRVGLAQATRL.

Residues 1-18 (MQPPSLLLLVLGLLAAPA) form the signal peptide. Residues 19–64 (AALVRIPLHKFTSVRRTMTELGGPVEDLIAKGPISKYAQGAPAVTG) constitute a propeptide, activation peptide. The region spanning 79–405 (YYGEIGIGTP…DRDQNRVGLA (327 aa)) is the Peptidase A1 domain. Cystine bridges form between Cys-91/Cys-160 and Cys-110/Cys-117. Residue Asp-97 is part of the active site. 2 N-linked (GlcNAc...) asparagine glycosylation sites follow: Asn-134 and Asn-261. Cysteines 284 and 288 form a disulfide. The active site involves Asp-293. Cys-327 and Cys-364 are joined by a disulfide.

Belongs to the peptidase A1 family. Consists of a light chain and a heavy chain. Interacts with ADAM30; this leads to activation of CTSD. Interacts with GRN; stabilizes CTSD; increases its proteolytic activity. In terms of processing, N- and O-glycosylated. Post-translationally, undergoes proteolytic cleavage and activation by ADAM30.

It localises to the lysosome. The protein localises to the melanosome. It is found in the secreted. Its subcellular location is the extracellular space. It carries out the reaction Specificity similar to, but narrower than, that of pepsin A. Does not cleave the 4-Gln-|-His-5 bond in B chain of insulin.. In terms of biological role, acid protease active in intracellular protein breakdown. Plays a role in APP processing following cleavage and activation by ADAM30 which leads to APP degradation. The polypeptide is Cathepsin D (CTSD) (Canis lupus familiaris (Dog)).